An 89-amino-acid chain; its full sequence is Cytochrome c oxidase subunit 7A, mitochondrial (89 aa).

The N-terminal 31 residues, 1–31 (MMNLSRAVVRSFATTAGRRSAAVPKDQIEKG), are a transit peptide targeting the mitochondrion. The Mitochondrial matrix portion of the chain corresponds to 32–58 (YFEIRKVQEHFQKKDGKPVFLKGSVVD). A helical membrane pass occupies residues 59–81 (NVLYRVTVALALVGIGGMGKLFY). Topologically, residues 82–89 (ELSVPKKE) are mitochondrial intermembrane.

The protein belongs to the cytochrome c oxidase VIIa family. In terms of assembly, component of the cytochrome c oxidase (complex IV, CIV), a multisubunit enzyme composed of a catalytic core of 3 subunits and several supernumerary subunits. The complex exists as a monomer or a dimer and forms supercomplexes (SCs) in the inner mitochondrial membrane with ubiquinol-cytochrome c oxidoreductase (cytochrome b-c1 complex, complex III, CIII).

The protein resides in the mitochondrion inner membrane. It functions in the pathway energy metabolism; oxidative phosphorylation. In terms of biological role, component of the cytochrome c oxidase, the last enzyme in the mitochondrial electron transport chain which drives oxidative phosphorylation. The respiratory chain contains 3 multisubunit complexes succinate dehydrogenase (complex II, CII), ubiquinol-cytochrome c oxidoreductase (cytochrome b-c1 complex, complex III, CIII) and cytochrome c oxidase (complex IV, CIV), that cooperate to transfer electrons derived from NADH and succinate to molecular oxygen, creating an electrochemical gradient over the inner membrane that drives transmembrane transport and the ATP synthase. Cytochrome c oxidase is the component of the respiratory chain that catalyzes the reduction of oxygen to water. Electrons originating from reduced cytochrome c in the intermembrane space (IMS) are transferred via the dinuclear copper A center (CU(A)) of subunit 2 and heme A of subunit 1 to the active site in subunit 1, a binuclear center (BNC) formed by heme A3 and copper B (CU(B)). The BNC reduces molecular oxygen to 2 water molecules using 4 electrons from cytochrome c in the IMS and 4 protons from the mitochondrial matrix. In Drosophila melanogaster (Fruit fly), this protein is Cytochrome c oxidase subunit 7A, mitochondrial.